Consider the following 190-residue polypeptide: RING finger protein 227 (190 aa).

The RING-type zinc-finger motif lies at 18–81 (CNICYRPFNL…RRVVTCPFCR (64 aa)). The interval 111–145 (KCERDEAGNPAKESSDADGEAEEEGESEKGAGPRS) is disordered. Acidic residues predominate over residues 126–136 (DADGEAEEEGE).

In Homo sapiens (Human), this protein is RING finger protein 227.